The sequence spans 151 residues: Prefoldin subunit alpha (151 aa).

Belongs to the prefoldin subunit alpha family. As to quaternary structure, heterohexamer of two alpha and four beta subunits.

The protein localises to the cytoplasm. Molecular chaperone capable of stabilizing a range of proteins. Seems to fulfill an ATP-independent, HSP70-like function in archaeal de novo protein folding. This is Prefoldin subunit alpha from Sulfurisphaera tokodaii (strain DSM 16993 / JCM 10545 / NBRC 100140 / 7) (Sulfolobus tokodaii).